The primary structure comprises 419 residues: Methylthioribose kinase (419 aa).

The ATP site is built by Asn49 and Lys64. Position 239 (Asp239) interacts with substrate. 256–258 (DPE) contacts ATP. Residue Arg365 coordinates substrate.

The protein belongs to the methylthioribose kinase family. In terms of assembly, homodimer.

It carries out the reaction 5-(methylsulfanyl)-D-ribose + ATP = 5-(methylsulfanyl)-alpha-D-ribose 1-phosphate + ADP + H(+). The enzyme catalyses 5-deoxy-D-ribose + ATP = 5-deoxy-alpha-D-ribose 1-phosphate + ADP + H(+). Its pathway is amino-acid biosynthesis; L-methionine biosynthesis via salvage pathway; S-methyl-5-thio-alpha-D-ribose 1-phosphate from S-methyl-5'-thioadenosine (hydrolase route): step 2/2. Catalyzes the phosphorylation of methylthioribose into methylthioribose-1-phosphate. Also catalyzes the phosphorylation of 5-deoxyribose to 5-deoxyribose-1-phosphate. Part of a bifunctional DHAP-shunt salvage pathway for SAM by-products. The chain is Methylthioribose kinase from Escherichia coli O45:K1 (strain S88 / ExPEC).